The sequence spans 164 residues: 3-isopropylmalate dehydratase small subunit 1 (164 aa).

It belongs to the LeuD family. LeuD type 2 subfamily. In terms of assembly, heterodimer of LeuC and LeuD.

It carries out the reaction (2R,3S)-3-isopropylmalate = (2S)-2-isopropylmalate. The protein operates within amino-acid biosynthesis; L-leucine biosynthesis; L-leucine from 3-methyl-2-oxobutanoate: step 2/4. Its function is as follows. Catalyzes the isomerization between 2-isopropylmalate and 3-isopropylmalate, via the formation of 2-isopropylmaleate. The sequence is that of 3-isopropylmalate dehydratase small subunit 1 (leuD1) from Pyrococcus furiosus (strain ATCC 43587 / DSM 3638 / JCM 8422 / Vc1).